A 3890-amino-acid polypeptide reads, in one-letter code: Extracellular matrix-binding protein EbhB (3890 aa).

An N-terminal signal peptide occupies residues 1 to 39 (MNYRDKIQKFSIRKYTVGTFSTVIATLVFLGFNTSQAHA). Residues 41–59 (ETNQPASVVKQKQQSNNEQ) are compositionally biased toward polar residues. Disordered regions lie at residues 41–152 (ETNQ…GNDN), 249–277 (MPQR…PRSV), 1347–1372 (NEKA…NATT), and 2418–2438 (TITP…TLTA). The span at 65–78 (SQVQNSQNSQNSQS) shows a compositional bias: low complexity. The segment covering 79-117 (LSATHENEQPNNSQANLVNQKVAQSSTTNDEQPASQNVN) has biased composition (polar residues). A compositionally biased stretch (basic and acidic residues) spans 130-140 (PDKEESKHKQN). Polar residues-rich tracts occupy residues 141–151 (ESQSANKNGND), 250–266 (PQRQ…QTRS), 1360–1372 (YRTT…NATT), and 2427–2438 (HSVSSNPSTLTA). FIVAR domains lie at 2524–2580 (AKNH…VSDA), 2610–2666 (SKNN…ISDE), 2687–2750 (DTHA…VQSA), 2780–2836 (AKTK…IAAE), 2864–2919 (AKTQ…IRQN), 2947–3002 (AKNQ…INTN), 3030–3085 (AKTQ…INDK), 3154–3212 (AMTK…VNQK), 3280–3339 (AMTG…VNNA), 3407–3465 (AMGN…VNRA), 3533–3591 (AMGN…VTEA), 3659–3717 (AMNT…ITQK), and 3785–3843 (AMAN…VEAA).

The sequence is that of Extracellular matrix-binding protein EbhB (ebhB) from Staphylococcus aureus (strain N315).